The chain runs to 71 residues: Palustrin-Ca (71 aa).

The signal sequence occupies residues 1-22; sequence MFTLKKSLLLLFFLGTISLSLC. A propeptide spanning residues 23–40 is cleaved from the precursor; that stretch reads EQERDADGDEGEVEEVKR. Cysteines 63 and 69 form a disulfide.

It belongs to the frog skin active peptide (FSAP) family. Brevinin subfamily. Expressed by the skin glands.

Its subcellular location is the secreted. The protein resides in the target cell membrane. Functionally, antibacterial peptide with amphipathic alpha-helical structure that exhibits potent broad-spectrum activity against Gram-positive and -negative bacteria. It is active against Listeria ATCC 54004 (MIC=30 ug/ml), S.aureus ATCC 25923 (MIC=7.8 ug/ml), S.suis 2 CVCC 606 (MIC=31.25 ug/ml), B.subtilis ADB403 (30 ug/ml), K.pneumoniae ATCC 700603 (MIC=60 ug/ml) and P.aeruginosa ATCC 227853 (MIC=30 ug/ml). Does not show activity against Salmonella ATCC 20020 and the fungus Candida albicans. Is also cytotoxic to HeLa cells at high concentrations. In addition, shows a strong antitumor activity but only a little hemolytic activity. Despite the presence of a Gly residue at position 10, this alpha-helical peptide remains relatively rigid, not exhibiting any significant flexibility during the molecular dynamics simulation. The peptide shows a preference for a position parallel to the target membrane that suggests it exerts its antimicrobial activity through a non-pore-forming mechanism of action, such as the carpet model or the interfacial activity model. This is Palustrin-Ca from Aquarana catesbeiana (American bullfrog).